Here is a 461-residue protein sequence, read N- to C-terminus: V-type ATP synthase beta chain (461 aa).

The protein belongs to the ATPase alpha/beta chains family.

Produces ATP from ADP in the presence of a proton gradient across the membrane. The V-type beta chain is a regulatory subunit. The chain is V-type ATP synthase beta chain from Streptococcus pneumoniae (strain CGSP14).